Here is a 304-residue protein sequence, read N- to C-terminus: GTP cyclohydrolase FolE2 (304 aa).

This sequence belongs to the GTP cyclohydrolase IV family.

It carries out the reaction GTP + H2O = 7,8-dihydroneopterin 3'-triphosphate + formate + H(+). It participates in cofactor biosynthesis; 7,8-dihydroneopterin triphosphate biosynthesis; 7,8-dihydroneopterin triphosphate from GTP: step 1/1. Converts GTP to 7,8-dihydroneopterin triphosphate. The sequence is that of GTP cyclohydrolase FolE2 from Bdellovibrio bacteriovorus (strain ATCC 15356 / DSM 50701 / NCIMB 9529 / HD100).